Here is a 378-residue protein sequence, read N- to C-terminus: Erythronate-4-phosphate dehydrogenase (378 aa).

Substrate is bound by residues S45 and T66. NAD(+)-binding residues include D146 and T175. The active site involves R208. D232 provides a ligand contact to NAD(+). E237 is an active-site residue. The active-site Proton donor is H254. NAD(+) is bound at residue G257. A substrate-binding site is contributed by Y258.

This sequence belongs to the D-isomer specific 2-hydroxyacid dehydrogenase family. PdxB subfamily. Homodimer.

It localises to the cytoplasm. The enzyme catalyses 4-phospho-D-erythronate + NAD(+) = (R)-3-hydroxy-2-oxo-4-phosphooxybutanoate + NADH + H(+). It participates in cofactor biosynthesis; pyridoxine 5'-phosphate biosynthesis; pyridoxine 5'-phosphate from D-erythrose 4-phosphate: step 2/5. Its function is as follows. Catalyzes the oxidation of erythronate-4-phosphate to 3-hydroxy-2-oxo-4-phosphonooxybutanoate. The chain is Erythronate-4-phosphate dehydrogenase from Salmonella agona (strain SL483).